Reading from the N-terminus, the 1022-residue chain is Histone-lysine N-methyltransferase TRX1 (1022 aa).

Positions 31–151 (SSAPCPLPKK…QRQGVHKEAA (121 aa)) are disordered. The segment covering 65 to 78 (EGPPPSPATAPPML) has biased composition (pro residues). Over residues 127 to 139 (GGAERRGYFSEPK) the composition is skewed to basic and acidic residues. The PWWP domain maps to 264–327 (PGDLVWAKLT…LKQAVPFLNG (64 aa)). Over residues 367 to 393 (SMEKGSSDANSNKDVHSCDNLSEDKTA) the composition is skewed to basic and acidic residues. The interval 367 to 399 (SMEKGSSDANSNKDVHSCDNLSEDKTAESGGDY) is disordered. Positions 402 to 461 (MTPIELGNLRVSKLGRIVTDSDYFHNKKHIWPEGYTAFRKFRSVKDPHVVILYKMEVLRN) constitute an FYR N-terminal domain. In terms of domain architecture, FYR C-terminal spans 465 to 548 (KARPLFRVTS…SCLKYFENAG (84 aa)). The Phorbol-ester/DAG-type zinc-finger motif lies at 553-609 (GYRAVHVNWKDLDYCSVCDMDEEYEDNLFLQCDKCRMMVHARCYGELEPLNGVLWLC). 2 consecutive PHD-type zinc fingers follow at residues 564–615 (LDYC…CRPE) and 677–744 (LLCS…KKHR). Residues 620–744 (SPRCCLCPVT…RLLSYCKKHR (125 aa)) form an extended PHD domain (ePHD) region. One can recognise an SET domain in the interval 861–979 (RRLAFGKSRI…PWEELTYDYR (119 aa)). Cysteine 943 serves as a coordination point for Zn(2+). Tyrosine 978 contacts S-adenosyl-L-methionine. Residues 985–1001 (QRLPCYCGFPKCRGVVN) form the Post-SET domain. Zn(2+) contacts are provided by cysteine 989, cysteine 991, and cysteine 996.

It belongs to the class V-like SAM-binding methyltransferase superfamily. Histone-lysine methyltransferase family. TRX/MLL subfamily. Interacts with EHD3. Expressed in leaf blades and panicles.

It localises to the nucleus. The catalysed reaction is L-lysyl(4)-[histone H3] + S-adenosyl-L-methionine = N(6)-methyl-L-lysyl(4)-[histone H3] + S-adenosyl-L-homocysteine + H(+). Possesses histone H3 methyltransferase activity in vitro. Methylates 'Lys-4' of histone H3. H3 'Lys-4' methylation represents a specific tag for epigenetic transcriptional activation. Functions as a receptor for the lipid messenger phosphatidylinositol 5-phosphate (PI5P), which negatively regulates its transcriptional activation activity. Involved in the regulation of flowering time and floral induction under long day (LD) conditions. Acts as an activator of flowering under LD conditions. May function through binding to EHD3, a repressor of GHD7. The polypeptide is Histone-lysine N-methyltransferase TRX1 (Oryza sativa subsp. japonica (Rice)).